A 167-amino-acid chain; its full sequence is Probable chemoreceptor glutamine deamidase CheD (167 aa).

The protein belongs to the CheD family.

The enzyme catalyses L-glutaminyl-[protein] + H2O = L-glutamyl-[protein] + NH4(+). Functionally, probably deamidates glutamine residues to glutamate on methyl-accepting chemotaxis receptors (MCPs), playing an important role in chemotaxis. The polypeptide is Probable chemoreceptor glutamine deamidase CheD (Moorella thermoacetica (strain ATCC 39073 / JCM 9320)).